A 159-amino-acid polypeptide reads, in one-letter code: Transcription elongation factor A protein-like 1 (159 aa).

A disordered region spans residues 1–99; that stretch reads MDKPRKENEE…CGVGKHKLEE (99 aa). The segment covering 17–34 has biased composition (basic and acidic residues); the sequence is KTDEERPPVEHSPEKQSL. The segment covering 37–54 has biased composition (acidic residues); the sequence is QSSEEQSSEEEFFPEELL. Positions 64–80 are enriched in basic and acidic residues; it reads SEERPPQEGLSRKDLFE.

The protein belongs to the TFS-II family. TFA subfamily.

The protein resides in the nucleus. Its function is as follows. May be involved in transcriptional regulation. Modulates various viral and cellular promoters in a promoter context-dependent manner. Does not bind DNA directly. The chain is Transcription elongation factor A protein-like 1 from Ateles geoffroyi (Black-handed spider monkey).